A 223-amino-acid polypeptide reads, in one-letter code: Ribose-5-phosphate isomerase A (223 aa).

Residues 28–31 (TGST), 81–84 (DGAD), and 94–97 (KGGG) contribute to the substrate site. Catalysis depends on E103, which acts as the Proton acceptor. K121 is a binding site for substrate.

This sequence belongs to the ribose 5-phosphate isomerase family. Homodimer.

It carries out the reaction aldehydo-D-ribose 5-phosphate = D-ribulose 5-phosphate. It participates in carbohydrate degradation; pentose phosphate pathway; D-ribose 5-phosphate from D-ribulose 5-phosphate (non-oxidative stage): step 1/1. Catalyzes the reversible conversion of ribose-5-phosphate to ribulose 5-phosphate. The protein is Ribose-5-phosphate isomerase A of Janthinobacterium sp. (strain Marseille) (Minibacterium massiliensis).